We begin with the raw amino-acid sequence, 109 residues long: UPF0060 membrane protein PA3275 (109 aa).

A run of 4 helical transmembrane segments spans residues 5-25, 27-47, 59-79, and 84-104; these read FWFV…YLWL, LGKS…FALL, AYAA…AFVE, and LWSD…VLFG.

Belongs to the UPF0060 family.

It is found in the cell inner membrane. The polypeptide is UPF0060 membrane protein PA3275 (Pseudomonas aeruginosa (strain ATCC 15692 / DSM 22644 / CIP 104116 / JCM 14847 / LMG 12228 / 1C / PRS 101 / PAO1)).